The chain runs to 413 residues: Probable Xaa-Pro aminopeptidase UREG_07123 (413 aa).

Mn(2+) contacts are provided by Asp-194, Asp-205, Glu-340, and Glu-379.

It belongs to the peptidase M24B family. Mn(2+) serves as cofactor.

The enzyme catalyses Release of any N-terminal amino acid, including proline, that is linked to proline, even from a dipeptide or tripeptide.. Its function is as follows. Catalyzes the removal of a penultimate prolyl residue from the N-termini of peptides. The chain is Probable Xaa-Pro aminopeptidase UREG_07123 from Uncinocarpus reesii (strain UAMH 1704).